We begin with the raw amino-acid sequence, 184 residues long: Photosystem I assembly protein Ycf4 (184 aa).

The next 2 membrane-spanning stretches (helical) occupy residues Ile19–Gly39 and Ile57–Ser77.

The protein belongs to the Ycf4 family.

The protein resides in the plastid. Its subcellular location is the chloroplast thylakoid membrane. Functionally, seems to be required for the assembly of the photosystem I complex. The sequence is that of Photosystem I assembly protein Ycf4 from Nicotiana tomentosiformis (Tobacco).